Reading from the N-terminus, the 441-residue chain is Putative cytochrome P450 138 (441 aa).

Cys388 is a binding site for heme.

This sequence belongs to the cytochrome P450 family. Requires heme as cofactor.

This is Putative cytochrome P450 138 (cyp138) from Mycobacterium bovis (strain ATCC BAA-935 / AF2122/97).